Consider the following 651-residue polypeptide: Protein cueball (651 aa).

An N-terminal signal peptide occupies residues 1-21 (MILRLFILLSIITVYLQLSVG). Residues 22 to 540 (IQQQFEFAIT…VCLAPNAWTG (519 aa)) are Extracellular-facing. N77, N102, and N114 each carry an N-linked (GlcNAc...) asparagine glycan. LDL-receptor class B repeat units follow at residues 115–162 (RTIY…DICG), 163–207 (RKLY…DQGA), and 208–253 (KRIF…TRNA). N-linked (GlcNAc...) asparagine glycosylation is present at N183. Positions 290-311 (VEGEEGTGAMDDNDIWPVGDFE) are disordered. N-linked (GlcNAc...) asparagine glycosylation is present at N324. 3 consecutive EGF-like domains span residues 374-408 (QLDELQREHCLGGGTYYPQQKFCVCVPGYKGTRCE), 409-440 (TNECHNFCVHGTCQISEMGYPKCYCQPGYSGE), and 443-480 (EVKKCLNFCQNGGDCQLDELTGEASCQCPSNFGGLRCE). Disulfide bonds link C383-C396, C398-C407, C412-C421, C416-C431, C447-C457, C451-C468, and C470-C479. 2 N-linked (GlcNAc...) asparagine glycosylation sites follow: N482 and N499. Residues 541–561 (SVLMPLMISLILILLLLTIFI) form a helical membrane-spanning segment. Topologically, residues 562–651 (HGLRRLYKPK…LIHNMEDDLY (90 aa)) are cytoplasmic.

The protein belongs to the cueball family.

It localises to the cell membrane. Its function is as follows. Has a role in spermatogenesis and oogenesis. This Drosophila willistoni (Fruit fly) protein is Protein cueball.